The sequence spans 807 residues: Glycerol-3-phosphate acyltransferase (807 aa).

The HXXXXD motif motif lies at 308-313 (CHRSHM).

Belongs to the GPAT/DAPAT family.

Its subcellular location is the cell inner membrane. It catalyses the reaction sn-glycerol 3-phosphate + an acyl-CoA = a 1-acyl-sn-glycero-3-phosphate + CoA. Its pathway is phospholipid metabolism; CDP-diacylglycerol biosynthesis; CDP-diacylglycerol from sn-glycerol 3-phosphate: step 1/3. The chain is Glycerol-3-phosphate acyltransferase from Shewanella sp. (strain MR-4).